We begin with the raw amino-acid sequence, 472 residues long: Trigger factor (472 aa).

One can recognise a PPIase FKBP-type domain in the interval 174–261; it reads GDIALVSFKG…LEDLKIKELP (88 aa). Positions 438–472 are disordered; sequence EKTPEKARDQIKEKSSKKKTTKTNKEKKSSKTPKS. Positions 439-451 are enriched in basic and acidic residues; it reads KTPEKARDQIKEK.

The protein belongs to the FKBP-type PPIase family. Tig subfamily.

Its subcellular location is the cytoplasm. The enzyme catalyses [protein]-peptidylproline (omega=180) = [protein]-peptidylproline (omega=0). Involved in protein export. Acts as a chaperone by maintaining the newly synthesized protein in an open conformation. Functions as a peptidyl-prolyl cis-trans isomerase. The protein is Trigger factor of Prochlorococcus marinus (strain NATL2A).